The primary structure comprises 149 residues: Calmodulin (149 aa).

Ala-2 bears the N-acetylalanine mark. EF-hand domains are found at residues 8 to 43 (EQIS…LGQN), 44 to 79 (PTEA…KMRD), 81 to 116 (DSEE…LGEK), and 117 to 149 (LTDN…MLSK). 20 residues coordinate Ca(2+): Asp-21, Asp-23, Asp-25, Thr-27, Glu-32, Asp-57, Asp-59, Asn-61, Thr-63, Glu-68, Asp-94, Asp-96, Asn-98, Tyr-100, Glu-105, Asp-130, Asp-132, Asp-134, Gln-136, and Glu-141.

Belongs to the calmodulin family.

Its function is as follows. Calmodulin mediates the control of a large number of enzymes, ion channels and other proteins by Ca(2+). Among the enzymes to be stimulated by the calmodulin-Ca(2+) complex are a number of protein kinases and phosphatases. This is Calmodulin (CMD1) from Pleurotus ostreatus (Oyster mushroom).